A 144-amino-acid polypeptide reads, in one-letter code: D-aminoacyl-tRNA deacylase (144 aa).

The short motif at 137–138 is the Gly-cisPro motif, important for rejection of L-amino acids element; sequence GP.

Belongs to the DTD family. In terms of assembly, homodimer.

Its subcellular location is the cytoplasm. The enzyme catalyses glycyl-tRNA(Ala) + H2O = tRNA(Ala) + glycine + H(+). The catalysed reaction is a D-aminoacyl-tRNA + H2O = a tRNA + a D-alpha-amino acid + H(+). An aminoacyl-tRNA editing enzyme that deacylates mischarged D-aminoacyl-tRNAs. Also deacylates mischarged glycyl-tRNA(Ala), protecting cells against glycine mischarging by AlaRS. Acts via tRNA-based rather than protein-based catalysis; rejects L-amino acids rather than detecting D-amino acids in the active site. By recycling D-aminoacyl-tRNA to D-amino acids and free tRNA molecules, this enzyme counteracts the toxicity associated with the formation of D-aminoacyl-tRNA entities in vivo and helps enforce protein L-homochirality. The protein is D-aminoacyl-tRNA deacylase of Acinetobacter baumannii (strain SDF).